Reading from the N-terminus, the 24-residue chain is Chlorate reductase subunit beta (24 aa).

As to quaternary structure, heterotrimer of alpha, beta and gamma subunits. It depends on [3Fe-4S] cluster as a cofactor. The cofactor is [4Fe-4S] cluster.

It is found in the cytoplasm. Electron transfer subunit of the chlorate reductase. The sequence is that of Chlorate reductase subunit beta from Stutzerimonas chloritidismutans (Pseudomonas chloritidismutans).